We begin with the raw amino-acid sequence, 1232 residues long: Dynactin subunit 1 (1232 aa).

Residues 31-73 (GATLFATGKWVGVILDDSKGKNDGTVQGRRYFTCEENHGIFVR) enclose the CAP-Gly domain. 2 disordered regions span residues 82-183 (DGAD…AQVK) and 339-358 (SASE…KKNT). The segment covering 86–95 (TTSPETPEPT) has biased composition (low complexity). The segment covering 108-117 (PKSSKLPTRP) has biased composition (polar residues). Low complexity predominate over residues 118 to 130 (SSSAASSGTASAS). The segment covering 133–144 (EISSSEPSTPAQ) has biased composition (polar residues). Residues 146–163 (PLAAPIIPSPSSAITSPV) are compositionally biased toward low complexity. 4 coiled-coil regions span residues 170-505 (GPSK…KEQQ), 908-1005 (ETVI…RTIE), 1046-1071 (LLLQ…LKAH), and 1136-1166 (AAQL…ETVS). Residues 172-183 (SKEEENLRAQVK) show a composition bias toward basic and acidic residues.

This sequence belongs to the dynactin 150 kDa subunit family. Monomer and homodimer. Subunit of dynactin, a multiprotein complex part of a tripartite complex with dynein and a adapter, such as BICDL1, BICD2 or HOOK3. The dynactin complex is built around ACTR1A/ACTB filament and consists of an actin-related filament composed of a shoulder domain, a pointed end and a barbed end. Its length is defined by its flexible shoulder domain. The soulder is composed of 2 DCTN1 subunits, 4 DCTN2 and 2 DCTN3. DCTN1/p150(glued) binds directly to microtubules and to cytoplasmic dynein.

It localises to the cytoplasm. The protein localises to the cytoskeleton. Its subcellular location is the microtubule organizing center. It is found in the centrosome. The protein resides in the centriole. It localises to the spindle. The protein localises to the cell cortex. Its function is as follows. Part of the dynactin complex that activates the molecular motor dynein for ultra-processive transport along microtubules. Plays a key role in dynein-mediated retrograde transport of vesicles and organelles along microtubules by recruiting and tethering dynein to microtubules. Binds to both dynein and microtubules providing a link between specific cargos, microtubules and dynein. Essential for targeting dynein to microtubule plus ends, recruiting dynein to membranous cargos and enhancing dynein processivity (the ability to move along a microtubule for a long distance without falling off the track). Can also act as a brake to slow the dynein motor during motility along the microtubule. Can regulate microtubule stability by promoting microtubule formation, nucleation and polymerization and by inhibiting microtubule catastrophe in neurons. Inhibits microtubule catastrophe by binding both to microtubules and to tubulin, leading to enhanced microtubule stability along the axon. Plays a role in metaphase spindle orientation. Plays a role in centriole cohesion and subdistal appendage organization and function. Its recruitment to the centriole in a KIF3A-dependent manner is essential for the maintenance of centriole cohesion and the formation of subdistal appendage. Also required for microtubule anchoring at the mother centriole. Plays a role in primary cilia formation. This chain is Dynactin subunit 1 (dctn1), found in Xenopus laevis (African clawed frog).